Consider the following 217-residue polypeptide: EF-hand domain-containing protein D2 homolog (217 aa).

Residues 1–28 are compositionally biased toward low complexity; that stretch reads MSVSSNASSASNKDSVDSPSSTTNTDSS. A disordered region spans residues 1 to 29; that stretch reads MSVSSNASSASNKDSVDSPSSTTNTDSSE. 2 consecutive EF-hand domains span residues 69–104 and 105–140; these read NQIK…LGAP and QTHL…AQAG. Ca(2+)-binding residues include Asp-82, Asp-86, Glu-93, Asp-118, Asp-120, Asp-122, Lys-124, and Glu-129. The segment covering 191–204 has biased composition (basic and acidic residues); sequence EQEERRREEEERAQ. A disordered region spans residues 191-217; it reads EQEERRREEEERAQRRQQFQQRAAIFQ. The segment covering 206 to 217 has biased composition (low complexity); sequence RQQFQQRAAIFQ.

This Drosophila melanogaster (Fruit fly) protein is EF-hand domain-containing protein D2 homolog (Swip-1).